We begin with the raw amino-acid sequence, 78 residues long: UPF0349 protein SAHV_0934 (78 aa).

The protein belongs to the UPF0349 family.

This Staphylococcus aureus (strain Mu3 / ATCC 700698) protein is UPF0349 protein SAHV_0934.